Consider the following 1176-residue polypeptide: Condensin complex subunit 1 (1176 aa).

Residues Ser464 and Ser475 each carry the phosphoserine modification.

This sequence belongs to the CND1 (condensin subunit 1) family. Component of the condensin complex, which contains the SMC2 and SMC4 heterodimer, and three non SMC subunits that probably regulate the complex: BRN1, YCS4 and YCG1/YCS5.

The protein resides in the nucleus. It localises to the chromosome. Regulatory subunit of the condensin complex, a complex required for conversion of interphase chromatin into mitotic-like condense chromosomes. The condensin complex probably introduces positive supercoils into relaxed DNA in the presence of type I topoisomerases and converts nicked DNA into positive knotted forms in the presence of type II topoisomerases. The condensin complex probably also plays a role during interphase. This Saccharomyces cerevisiae (strain ATCC 204508 / S288c) (Baker's yeast) protein is Condensin complex subunit 1 (YCS4).